Consider the following 129-residue polypeptide: Small ribosomal subunit protein uS11 (129 aa).

The protein belongs to the universal ribosomal protein uS11 family. In terms of assembly, part of the 30S ribosomal subunit. Interacts with proteins S7 and S18. Binds to IF-3.

In terms of biological role, located on the platform of the 30S subunit, it bridges several disparate RNA helices of the 16S rRNA. Forms part of the Shine-Dalgarno cleft in the 70S ribosome. The polypeptide is Small ribosomal subunit protein uS11 (Nitrosomonas europaea (strain ATCC 19718 / CIP 103999 / KCTC 2705 / NBRC 14298)).